The primary structure comprises 65 residues: DNA-directed RNA polymerase subunit omega (65 aa).

The protein belongs to the RNA polymerase subunit omega family. As to quaternary structure, the RNAP catalytic core consists of 2 alpha, 1 beta, 1 beta' and 1 omega subunit. When a sigma factor is associated with the core the holoenzyme is formed, which can initiate transcription.

It carries out the reaction RNA(n) + a ribonucleoside 5'-triphosphate = RNA(n+1) + diphosphate. Functionally, promotes RNA polymerase assembly. Latches the N- and C-terminal regions of the beta' subunit thereby facilitating its interaction with the beta and alpha subunits. In Finegoldia magna (strain ATCC 29328 / DSM 20472 / WAL 2508) (Peptostreptococcus magnus), this protein is DNA-directed RNA polymerase subunit omega.